The sequence spans 506 residues: Probable alpha-L-arabinofuranosidase B (506 aa).

A signal peptide spans 1–26; sequence MSSGLSLERACAVALGIVASASLVAA. The tract at residues 27–343 is catalytic; that stretch reads GPCDIYSSGG…ADIVAAKYAI (317 aa). Cystine bridges form between C29-C39, C89-C94, and C184-C185. An N-linked (GlcNAc...) asparagine glycan is attached at N91. Substrate is bound at residue D227. E229 (nucleophile) is an active-site residue. Residues N230 and G304 each coordinate substrate. Residue D305 is the Proton donor of the active site. An ABD region spans residues 344–506; the sequence is ASLTSGPALT…VSWVVSTGFA (163 aa). A disulfide bridge links C409 with C447. Residues H424, N426, F427, D443, H471, E473, L476, and D496 each contribute to the substrate site.

Belongs to the glycosyl hydrolase 54 family.

The protein resides in the secreted. It catalyses the reaction Hydrolysis of terminal non-reducing alpha-L-arabinofuranoside residues in alpha-L-arabinosides.. It participates in glycan metabolism; L-arabinan degradation. Functionally, alpha-L-arabinofuranosidase involved in the degradation of arabinoxylan, a major component of plant hemicellulose. Able to hydrolyze 1,5-, 1,3- and 1,2-alpha-linkages not only in L-arabinofuranosyl oligosaccharides, but also in polysaccharides containing terminal non-reducing L-arabinofuranoses in side chains, like L-arabinan, arabinogalactan and arabinoxylan. The chain is Probable alpha-L-arabinofuranosidase B (abfB) from Aspergillus flavus (strain ATCC 200026 / FGSC A1120 / IAM 13836 / NRRL 3357 / JCM 12722 / SRRC 167).